A 165-amino-acid polypeptide reads, in one-letter code: Probable chemoreceptor glutamine deamidase CheD (165 aa).

The protein belongs to the CheD family.

The enzyme catalyses L-glutaminyl-[protein] + H2O = L-glutamyl-[protein] + NH4(+). In terms of biological role, probably deamidates glutamine residues to glutamate on methyl-accepting chemotaxis receptors (MCPs), playing an important role in chemotaxis. This chain is Probable chemoreceptor glutamine deamidase CheD, found in Symbiobacterium thermophilum (strain DSM 24528 / JCM 14929 / IAM 14863 / T).